The following is a 21-amino-acid chain: Glucose-1-phosphate adenylyltransferase large subunit (21 aa).

A disordered region spans residues 1–21 (SVTADNASETKVREIGQEKSS). The segment covering 8-21 (SETKVREIGQEKSS) has biased composition (basic and acidic residues).

This sequence belongs to the bacterial/plant glucose-1-phosphate adenylyltransferase family. Heterotetramer.

The protein localises to the plastid. It is found in the chloroplast. The protein resides in the amyloplast. It catalyses the reaction alpha-D-glucose 1-phosphate + ATP + H(+) = ADP-alpha-D-glucose + diphosphate. It functions in the pathway glycan biosynthesis; starch biosynthesis. Activated by 3'phosphoglycerate, inhibited by orthophosphate. Allosteric regulation. This protein plays a role in synthesis of starch. It catalyzes the synthesis of the activated glycosyl donor, ADP-glucose from Glc-1-P and ATP. In Spinacia oleracea (Spinach), this protein is Glucose-1-phosphate adenylyltransferase large subunit.